A 412-amino-acid polypeptide reads, in one-letter code: Proline-rich protein 30 (412 aa).

Polar residues-rich tracts occupy residues 1 to 15 (MLPQ…QTSV) and 23 to 39 (GFSQ…QPLS). 3 disordered regions span residues 1-88 (MLPQ…HPYS), 123-174 (PLTP…SNRQ), and 317-412 (RPKE…KSSV). Composition is skewed to low complexity over residues 50-59 (PFSSTQSRRP), 126-142 (PSFS…PHSP), and 334-350 (QLPA…ADPV). A compositionally biased stretch (polar residues) spans 353–372 (TPSQTRSFRSAGLQSPNSPR).

In Homo sapiens (Human), this protein is Proline-rich protein 30 (PRR30).